A 54-amino-acid chain; its full sequence is Insulin (54 aa).

Cystine bridges form between Cys7/Cys39, Cys19/Cys52, and Cys38/Cys43.

Belongs to the insulin family. Heterodimer of a B chain and an A chain linked by two disulfide bonds.

It localises to the secreted. Insulin decreases blood glucose concentration. It increases cell permeability to monosaccharides, amino acids and fatty acids. It accelerates glycolysis, the pentose phosphate cycle, and glycogen synthesis in liver. The polypeptide is Insulin (ins) (Squalus acanthias (Spiny dogfish)).